Reading from the N-terminus, the 365-residue chain is Class I histocompatibility antigen, Gogo-A*0401 alpha chain (365 aa).

Residues 1-24 (MAVMAPRTLVLLLSGALALTQTWA) form the signal peptide. Residues 25–114 (GSHSMRYFYT…LRGYYNQSED (90 aa)) are alpha-1. The Extracellular segment spans residues 25-308 (GSHSMRYFYT…EPSSQPTIPI (284 aa)). Asn110 is a glycosylation site (N-linked (GlcNAc...) asparagine). The tract at residues 115 to 206 (GSHTIQRMYG…ENGKETLQLT (92 aa)) is alpha-2. 2 disulfides stabilise this stretch: Cys125–Cys188 and Cys227–Cys283. Positions 207-298 (DAPKTHMTHH…GLPKPLTLRW (92 aa)) are alpha-3. An Ig-like C1-type domain is found at 209-295 (PKTHMTHHPV…QHEGLPKPLT (87 aa)). Positions 299-308 (EPSSQPTIPI) are connecting peptide. A helical membrane pass occupies residues 309 to 332 (VGIIAGLVLFGAVIAGAVVAAVRW). Residues 333 to 365 (RRKSSDRKGGSYSQAASSDSAQGSDVSLTACKV) are Cytoplasmic-facing. The interval 338–365 (DRKGGSYSQAASSDSAQGSDVSLTACKV) is disordered. Low complexity predominate over residues 342–359 (GSYSQAASSDSAQGSDVS). Ser343 is subject to Phosphoserine. Tyr344 is subject to Phosphotyrosine. Phosphoserine is present on residues Ser345, Ser349, Ser350, Ser352, Ser356, and Ser359.

The protein belongs to the MHC class I family. In terms of assembly, heterodimer of an alpha chain and a beta chain (beta-2-microglobulin).

It localises to the membrane. In terms of biological role, involved in the presentation of foreign antigens to the immune system. This chain is Class I histocompatibility antigen, Gogo-A*0401 alpha chain, found in Gorilla gorilla gorilla (Western lowland gorilla).